The chain runs to 664 residues: UvrABC system protein B (664 aa).

One can recognise a Helicase ATP-binding domain in the interval 23–180 (EGLNRGMRFQ…ERLARIGYQR (158 aa)). Position 36–43 (36–43 (GVTGSGKT)) interacts with ATP. Residues 89 to 112 (YYDYYQPEAYIPTKDLYIEKNADI) carry the Beta-hairpin motif. A Helicase C-terminal domain is found at 429 to 588 (DLVNEIVKVK…ITPRSVIKPL (160 aa)). Residues 622 to 657 (EEYMAVLEEEMYRAASELRYEDAAALRDELFRIREE) form the UVR domain.

The protein belongs to the UvrB family. In terms of assembly, forms a heterotetramer with UvrA during the search for lesions. Interacts with UvrC in an incision complex.

It is found in the cytoplasm. Functionally, the UvrABC repair system catalyzes the recognition and processing of DNA lesions. A damage recognition complex composed of 2 UvrA and 2 UvrB subunits scans DNA for abnormalities. Upon binding of the UvrA(2)B(2) complex to a putative damaged site, the DNA wraps around one UvrB monomer. DNA wrap is dependent on ATP binding by UvrB and probably causes local melting of the DNA helix, facilitating insertion of UvrB beta-hairpin between the DNA strands. Then UvrB probes one DNA strand for the presence of a lesion. If a lesion is found the UvrA subunits dissociate and the UvrB-DNA preincision complex is formed. This complex is subsequently bound by UvrC and the second UvrB is released. If no lesion is found, the DNA wraps around the other UvrB subunit that will check the other stand for damage. In Thermotoga petrophila (strain ATCC BAA-488 / DSM 13995 / JCM 10881 / RKU-1), this protein is UvrABC system protein B.